The chain runs to 127 residues: S-adenosylmethionine decarboxylase proenzyme (127 aa).

The Schiff-base intermediate with substrate; via pyruvic acid role is filled by Ser63. Ser63 bears the Pyruvic acid (Ser); by autocatalysis mark. Residue His68 is the Proton acceptor; for processing activity of the active site. The Proton donor; for catalytic activity role is filled by Cys83.

It belongs to the prokaryotic AdoMetDC family. Type 1 subfamily. In terms of assembly, heterotetramer of two alpha and two beta chains arranged as a dimer of alpha/beta heterodimers. Requires pyruvate as cofactor. Is synthesized initially as an inactive proenzyme. Formation of the active enzyme involves a self-maturation process in which the active site pyruvoyl group is generated from an internal serine residue via an autocatalytic post-translational modification. Two non-identical subunits are generated from the proenzyme in this reaction, and the pyruvate is formed at the N-terminus of the alpha chain, which is derived from the carboxyl end of the proenzyme. The post-translation cleavage follows an unusual pathway, termed non-hydrolytic serinolysis, in which the side chain hydroxyl group of the serine supplies its oxygen atom to form the C-terminus of the beta chain, while the remainder of the serine residue undergoes an oxidative deamination to produce ammonia and the pyruvoyl group blocking the N-terminus of the alpha chain.

The catalysed reaction is S-adenosyl-L-methionine + H(+) = S-adenosyl 3-(methylsulfanyl)propylamine + CO2. It functions in the pathway amine and polyamine biosynthesis; S-adenosylmethioninamine biosynthesis; S-adenosylmethioninamine from S-adenosyl-L-methionine: step 1/1. Functionally, catalyzes the decarboxylation of S-adenosylmethionine to S-adenosylmethioninamine (dcAdoMet), the propylamine donor required for the synthesis of the polyamines spermine and spermidine from the diamine putrescine. The sequence is that of S-adenosylmethionine decarboxylase proenzyme from Carboxydothermus hydrogenoformans (strain ATCC BAA-161 / DSM 6008 / Z-2901).